A 424-amino-acid polypeptide reads, in one-letter code: DNA primase DnaG (424 aa).

The region spanning 166 to 241 is the Toprim domain; sequence DTIIIVEGRA…KVDFIARAPE (76 aa). 3 residues coordinate Mg(2+): Glu-172, Asp-215, and Asp-217.

It belongs to the archaeal DnaG primase family. In terms of assembly, forms a ternary complex with MCM helicase and DNA. Component of the archaeal exosome complex. It depends on Mg(2+) as a cofactor.

The catalysed reaction is ssDNA + n NTP = ssDNA/pppN(pN)n-1 hybrid + (n-1) diphosphate.. In terms of biological role, RNA polymerase that catalyzes the synthesis of short RNA molecules used as primers for DNA polymerase during DNA replication. Also part of the exosome, which is a complex involved in RNA degradation. Acts as a poly(A)-binding protein that enhances the interaction between heteromeric, adenine-rich transcripts and the exosome. The sequence is that of DNA primase DnaG from Staphylothermus marinus (strain ATCC 43588 / DSM 3639 / JCM 9404 / F1).